The chain runs to 321 residues: Methionyl-tRNA formyltransferase (321 aa).

111 to 114 (GLLP) is a (6S)-5,6,7,8-tetrahydrofolate binding site.

It belongs to the Fmt family.

The catalysed reaction is L-methionyl-tRNA(fMet) + (6R)-10-formyltetrahydrofolate = N-formyl-L-methionyl-tRNA(fMet) + (6S)-5,6,7,8-tetrahydrofolate + H(+). Functionally, attaches a formyl group to the free amino group of methionyl-tRNA(fMet). The formyl group appears to play a dual role in the initiator identity of N-formylmethionyl-tRNA by promoting its recognition by IF2 and preventing the misappropriation of this tRNA by the elongation apparatus. In Chlamydia pneumoniae (Chlamydophila pneumoniae), this protein is Methionyl-tRNA formyltransferase.